We begin with the raw amino-acid sequence, 239 residues long: Putative antitoxin VapB45 (239 aa).

In terms of biological role, possibly the antitoxin component of a type II toxin-antitoxin (TA) system. Its cognate toxin is VapC45. The sequence is that of Putative antitoxin VapB45 from Mycobacterium tuberculosis (strain ATCC 25618 / H37Rv).